We begin with the raw amino-acid sequence, 249 residues long: 2,3-bisphosphoglycerate-dependent phosphoglycerate mutase (249 aa).

Substrate contacts are provided by residues 8–15, 21–22, arginine 60, 87–90, lysine 98, 114–115, and 183–184; these read RHGESIWN, TG, ERHY, RR, and GN. Histidine 9 acts as the Tele-phosphohistidine intermediate in catalysis. Residue glutamate 87 is the Proton donor/acceptor of the active site.

It belongs to the phosphoglycerate mutase family. BPG-dependent PGAM subfamily.

It catalyses the reaction (2R)-2-phosphoglycerate = (2R)-3-phosphoglycerate. It participates in carbohydrate degradation; glycolysis; pyruvate from D-glyceraldehyde 3-phosphate: step 3/5. Its function is as follows. Catalyzes the interconversion of 2-phosphoglycerate and 3-phosphoglycerate. In Caldanaerobacter subterraneus subsp. tengcongensis (strain DSM 15242 / JCM 11007 / NBRC 100824 / MB4) (Thermoanaerobacter tengcongensis), this protein is 2,3-bisphosphoglycerate-dependent phosphoglycerate mutase.